The primary structure comprises 608 residues: Aspartate--tRNA(Asp/Asn) ligase (608 aa).

E187 contributes to the L-aspartate binding site. The tract at residues 211 to 214 is aspartate; sequence QQFK. The L-aspartate site is built by R233 and H461. Residue 233–235 participates in ATP binding; that stretch reads RDE. ATP is bound at residue E495. R502 provides a ligand contact to L-aspartate. Residue 547-550 participates in ATP binding; the sequence is GLDR.

This sequence belongs to the class-II aminoacyl-tRNA synthetase family. Type 1 subfamily. Homodimer.

It is found in the cytoplasm. It catalyses the reaction tRNA(Asx) + L-aspartate + ATP = L-aspartyl-tRNA(Asx) + AMP + diphosphate. In terms of biological role, aspartyl-tRNA synthetase with relaxed tRNA specificity since it is able to aspartylate not only its cognate tRNA(Asp) but also tRNA(Asn). Reaction proceeds in two steps: L-aspartate is first activated by ATP to form Asp-AMP and then transferred to the acceptor end of tRNA(Asp/Asn). This Chlorobium phaeobacteroides (strain BS1) protein is Aspartate--tRNA(Asp/Asn) ligase.